Consider the following 1097-residue polypeptide: Cyclin-T (1097 aa).

3 disordered regions span residues 319 to 782 (SNIT…SNGI), 804 to 936 (LLKP…SLQA), and 985 to 1097 (AAPV…YNKK). Residues 332–350 (DSRDRDRDRERERERERDP) show a composition bias toward basic and acidic residues. Low complexity-rich tracts occupy residues 373–390 (SSSV…SSSS), 420–456 (PSSH…GRPS), 467–478 (GMPPVGVGMPPH), and 489–511 (PQQP…SGMS). Polar residues predominate over residues 580 to 591 (LPYSQSQSYGHM). The span at 592–606 (QQQPVPQSQQQQMPP) shows a compositional bias: low complexity. The segment covering 609–620 (SQHSLQSKNSLF) has biased composition (polar residues). Residues 652–675 (HDYKLNSHPRDKESPKKERLTPTK) show a composition bias toward basic and acidic residues. Residues 687 to 698 (GSGNSSSGSGSS) are compositionally biased toward low complexity. Residues 860 to 870 (GEIKEESSSKS) are compositionally biased toward basic and acidic residues. Basic residues predominate over residues 871 to 883 (EKKKKKDKHKHKE). Residues 884 to 895 (KDKSKDKTEKEE) are compositionally biased toward basic and acidic residues. Phosphoserine is present on Ser916. Residues 993-1007 (GAGGGGYSSSGGSSS) show a composition bias toward gly residues. The span at 1016 to 1031 (SDRDRDKESKKNKSQD) shows a compositional bias: basic and acidic residues. Residues 1037–1050 (GAGGGIFNPLGGAG) are compositionally biased toward gly residues. Residues 1087–1097 (APPPMPVYNKK) are compositionally biased toward pro residues.

Belongs to the cyclin family. Cyclin C subfamily. In terms of assembly, component of the super elongation complex (SEC), at least composed of Ell, Cdk9, cyclin-T (CycT), lilli and ear. Associates with CDK9 to form P-TEFb.

Its subcellular location is the nucleus. Its function is as follows. Regulatory subunit of the cyclin-dependent kinase pair (CDK9/cyclin T) complex, also called positive transcription elongation factor B (P-TEFb), which is proposed to facilitate the transition from abortive to production elongation by phosphorylating the CTD (carboxy-terminal domain) of the large subunit of RNA polymerase II (RNAP II). This Drosophila melanogaster (Fruit fly) protein is Cyclin-T (CycT).